The following is a 203-amino-acid chain: 3-isopropylmalate dehydratase small subunit (203 aa).

Belongs to the LeuD family. LeuD type 1 subfamily. Heterodimer of LeuC and LeuD.

It catalyses the reaction (2R,3S)-3-isopropylmalate = (2S)-2-isopropylmalate. It functions in the pathway amino-acid biosynthesis; L-leucine biosynthesis; L-leucine from 3-methyl-2-oxobutanoate: step 2/4. Catalyzes the isomerization between 2-isopropylmalate and 3-isopropylmalate, via the formation of 2-isopropylmaleate. In Phenylobacterium zucineum (strain HLK1), this protein is 3-isopropylmalate dehydratase small subunit.